A 139-amino-acid chain; its full sequence is ATP synthase epsilon chain (139 aa).

The protein belongs to the ATPase epsilon chain family. In terms of assembly, F-type ATPases have 2 components, CF(1) - the catalytic core - and CF(0) - the membrane proton channel. CF(1) has five subunits: alpha(3), beta(3), gamma(1), delta(1), epsilon(1). CF(0) has three main subunits: a, b and c.

Its subcellular location is the cell membrane. Its function is as follows. Produces ATP from ADP in the presence of a proton gradient across the membrane. The protein is ATP synthase epsilon chain of Streptococcus sanguinis.